The sequence spans 218 residues: Small ribosomal subunit protein uS3 (218 aa).

The 69-residue stretch at 38–106 (IREYINKRLQ…RVHINIVEIK (69 aa)) folds into the KH type-2 domain.

This sequence belongs to the universal ribosomal protein uS3 family. In terms of assembly, part of the 30S ribosomal subunit. Forms a tight complex with proteins S10 and S14.

Functionally, binds the lower part of the 30S subunit head. Binds mRNA in the 70S ribosome, positioning it for translation. This chain is Small ribosomal subunit protein uS3, found in Geobacillus sp. (strain WCH70).